Consider the following 212-residue polypeptide: Hemagglutinin 2 (212 aa).

It localises to the secreted. Functionally, induces agglutination of neuraminidase-treated erythrocytes. The sequence is that of Hemagglutinin 2 (hag2) from Eikenella corrodens.